The primary structure comprises 353 residues: uncharacterized protein (353 aa).

This is an uncharacterized protein from Caenorhabditis elegans.